The chain runs to 103 residues: MCLRVLDLRIPKVIITYCPKCRTHTEHSVTIYKHGKRRSLSEGERRYARKKKGYGSKRKPEQKRFAKVTKKTVLKLKCSKCGYIIHREGIRLKKAELVEVGGR.

2 residues coordinate Zn(2+): Cys18 and Cys21. The C4-type zinc-finger motif lies at 18 to 81 (CPKCRTHTEH…TVLKLKCSKC (64 aa)). The segment at 40-62 (LSEGERRYARKKKGYGSKRKPEQ) is disordered. The span at 47–57 (YARKKKGYGSK) shows a compositional bias: basic residues. Residues Cys78 and Cys81 each contribute to the Zn(2+) site.

This sequence belongs to the eukaryotic ribosomal protein eL42 family. As to quaternary structure, part of the 50S ribosomal subunit. Zn(2+) is required as a cofactor.

Functionally, binds to the 23S rRNA. In Desulfurococcus amylolyticus (strain DSM 18924 / JCM 16383 / VKM B-2413 / 1221n) (Desulfurococcus kamchatkensis), this protein is Large ribosomal subunit protein eL42.